Here is a 357-residue protein sequence, read N- to C-terminus: Glucose-6-phosphatase catalytic subunit 1 (357 aa).

The Lumenal portion of the chain corresponds to 1 to 28 (MEERMNVLHDFGIQSTRYLQVNYEDSQD). The chain crosses the membrane as a helical span at residues 29–49 (WFVLVSVIADLRNAFYVLFPI). Residues 50-60 (WFHIQETVGIN) are Cytoplasmic-facing. Residues 61–81 (LLWVAVVGDWFNLVFKWILFG) form a helical membrane-spanning segment. Over 82-117 (QRPYWWVLDTDYYSNSSVPLIKQFPVTCETGPGSPS) the chain is Lumenal. A substrate-binding site is contributed by R83. N96 carries N-linked (GlcNAc...) asparagine glycosylation. The helical transmembrane segment at 118–138 (GHAMGTAGVYYVMVTSTLAIF) threads the bilayer. H119 serves as the catalytic Proton donor. At 139–147 (RGKKKSTYG) the chain is on the cytoplasmic side. A helical transmembrane segment spans residues 148–168 (FRCLNVVLWLGYWAVQLNVCL). Residues 169–170 (SR) are Lumenal-facing. A substrate-binding site is contributed by R170. Residues 171–191 (IYLAAHFPHQVVAGVLSGIAV) form a helical membrane-spanning segment. The Nucleophile role is filled by H176. Topologically, residues 192 to 211 (AETFSHIRGIYNASLQRYCL) are cytoplasmic. Residues 212–232 (ITFFLFGFALGFYLLLKGLGV) form a helical membrane-spanning segment. Residues 233–254 (DLLWTLEKAKRWCERPEWVHLD) are Lumenal-facing. The chain crosses the membrane as a helical span at residues 255 to 275 (TTPFASLFKNLGTLLGLGLAL). At 276–291 (NSSMYRKSCKGELRKS) the chain is on the cytoplasmic side. The helical transmembrane segment at 292 to 312 (LPFRLACIVASLGLLHLFDSL) threads the bilayer. Residues 313–320 (KPPSQIES) lie on the Lumenal side of the membrane. The helical transmembrane segment at 321–341 (IFYILSFCKSATVPFASVSLI) threads the bilayer. The Cytoplasmic segment spans residues 342-357 (PYCLARLLGQTHKKSL). Residues 354 to 357 (KKSL) carry the Prevents secretion from ER motif.

This sequence belongs to the glucose-6-phosphatase family.

It localises to the endoplasmic reticulum membrane. The catalysed reaction is D-glucose 6-phosphate + H2O = D-glucose + phosphate. It participates in carbohydrate biosynthesis; gluconeogenesis. Hydrolyzes glucose-6-phosphate to glucose in the endoplasmic reticulum. Forms with the glucose-6-phosphate transporter (SLC37A4/G6PT) the complex responsible for glucose production in the terminal step of glycogenolysis and gluconeogenesis. Hence, it is the key enzyme in homeostatic regulation of blood glucose levels. The chain is Glucose-6-phosphatase catalytic subunit 1 (G6pc1) from Rattus norvegicus (Rat).